Here is a 97-residue protein sequence, read N- to C-terminus: MKFYVVALALLVAFVCIAESRSVETERAVDADLEDDLDDLEEYLEGIAEALELEDFPDTEEARGETFDKLKEKLKTFYQKLVEKAEDLKGDLKAKLS.

The first 22 residues, 1 to 22 (MKFYVVALALLVAFVCIAESRS), serve as a signal peptide directing secretion. The propeptide occupies 23 to 63 (VETERAVDADLEDDLDDLEEYLEGIAEALELEDFPDTEEAR). Positions 60-63 (EEAR) match the Processing quadruplet motif motif.

Post-translationally, cleavage of the propeptide depends on the processing quadruplet motif (XXXR, with at least one of X being E). Expressed by the venom gland.

It is found in the secreted. Functionally, does not have antimicrobial or antifungal activity. Does not have hemolytic activity against rabbit erythrocytes. However, it causes some conductance changes in planar bilayer membranes, without membrane rupture, suggesting a cytolytic function on other biological targets. It causes paralysis, but is not lethal when injected into insect (M.domestica) larvae. This is M-zodatoxin-Lt7a from Lachesana tarabaevi (Spider).